Here is a 143-residue protein sequence, read N- to C-terminus: Large-conductance mechanosensitive channel (143 aa).

A run of 2 helical transmembrane segments spans residues 10–30 and 89–109; these read FAVK…GAFS and GSFI…FLMV.

This sequence belongs to the MscL family. In terms of assembly, homopentamer.

The protein resides in the cell inner membrane. Its function is as follows. Channel that opens in response to stretch forces in the membrane lipid bilayer. May participate in the regulation of osmotic pressure changes within the cell. In Burkholderia cenocepacia (strain ATCC BAA-245 / DSM 16553 / LMG 16656 / NCTC 13227 / J2315 / CF5610) (Burkholderia cepacia (strain J2315)), this protein is Large-conductance mechanosensitive channel.